The sequence spans 189 residues: Lipid A acyltransferase PagP (189 aa).

An N-terminal signal peptide occupies residues 1 to 23 (MRLKLILYFLILSCYLGIGSARA). Residues His61, Asp104, and Ser105 contribute to the active site.

Belongs to the lipid A palmitoyltransferase family. In terms of assembly, homodimer.

It is found in the cell outer membrane. It carries out the reaction a lipid A + a 1,2-diacyl-sn-glycero-3-phosphocholine = a hepta-acyl lipid A + a 2-acyl-sn-glycero-3-phosphocholine. The catalysed reaction is a lipid IVA + a 1,2-diacyl-sn-glycero-3-phosphocholine = a lipid IVB + a 2-acyl-sn-glycero-3-phosphocholine. The enzyme catalyses a lipid IIA + a 1,2-diacyl-sn-glycero-3-phosphocholine = a lipid IIB + a 2-acyl-sn-glycero-3-phosphocholine. Transfers a fatty acid residue from the sn-1 position of a phospholipid to the N-linked hydroxyfatty acid chain on the proximal unit of lipid A or its precursors. The sequence is that of Lipid A acyltransferase PagP from Erwinia tasmaniensis (strain DSM 17950 / CFBP 7177 / CIP 109463 / NCPPB 4357 / Et1/99).